Consider the following 104-residue polypeptide: UPF0145 protein VNG_2432C (104 aa).

The protein belongs to the UPF0145 family.

This chain is UPF0145 protein VNG_2432C, found in Halobacterium salinarum (strain ATCC 700922 / JCM 11081 / NRC-1) (Halobacterium halobium).